We begin with the raw amino-acid sequence, 247 residues long: MLVLPAIDLLDNEAVRLLQGDYSKKTVYSSSPEKMIQVFEEQGATLIHIVDLNAAKTGKSENEKTIKKIKEKCTVDLELGGGIRTIDNMKFYDGLGVSRLILGTVAVEEPNVVEKAVSLFGQDRIVIGVDAKNGYVRTKGWESNSGILYKDFLTTMYGMGIRHVIFTDIARDGMMEGPNTLAYAELLETFPDLQLVASGGVSSKEDLVELYDKTNGKLFGAITGKAIYEGKLDLKESIRILNQKREK.

The active-site Proton acceptor is the aspartate 8. The Proton donor role is filled by aspartate 130.

Belongs to the HisA/HisF family.

Its subcellular location is the cytoplasm. It catalyses the reaction 1-(5-phospho-beta-D-ribosyl)-5-[(5-phospho-beta-D-ribosylamino)methylideneamino]imidazole-4-carboxamide = 5-[(5-phospho-1-deoxy-D-ribulos-1-ylimino)methylamino]-1-(5-phospho-beta-D-ribosyl)imidazole-4-carboxamide. Its pathway is amino-acid biosynthesis; L-histidine biosynthesis; L-histidine from 5-phospho-alpha-D-ribose 1-diphosphate: step 4/9. This chain is 1-(5-phosphoribosyl)-5-[(5-phosphoribosylamino)methylideneamino] imidazole-4-carboxamide isomerase, found in Leptospira biflexa serovar Patoc (strain Patoc 1 / Ames).